The sequence spans 336 residues: tRNA N6-adenosine threonylcarbamoyltransferase (336 aa).

Fe cation-binding residues include H114 and H118. Residues 136 to 140, D169, G182, D186, and N275 contribute to the substrate site; that span reads LVSGG. D301 contacts Fe cation.

This sequence belongs to the KAE1 / TsaD family. Fe(2+) is required as a cofactor.

It is found in the cytoplasm. It carries out the reaction L-threonylcarbamoyladenylate + adenosine(37) in tRNA = N(6)-L-threonylcarbamoyladenosine(37) in tRNA + AMP + H(+). In terms of biological role, required for the formation of a threonylcarbamoyl group on adenosine at position 37 (t(6)A37) in tRNAs that read codons beginning with adenine. Is involved in the transfer of the threonylcarbamoyl moiety of threonylcarbamoyl-AMP (TC-AMP) to the N6 group of A37, together with TsaE and TsaB. TsaD likely plays a direct catalytic role in this reaction. This is tRNA N6-adenosine threonylcarbamoyltransferase from Streptococcus mutans serotype c (strain ATCC 700610 / UA159).